The chain runs to 693 residues: tRNA (guanine(37)-N(1))-methyltransferase (693 aa).

Residues Arg-327, 365–366 (DI), and 392–393 (DA) contribute to the S-adenosyl-L-methionine site. The tract at residues 497-572 (AGDSHQSNSH…QKAEDAPTNE (76 aa)) is disordered. Over residues 500 to 512 (SHQSNSHQSNPHE) the composition is skewed to low complexity. Asn-591 serves as a coordination point for S-adenosyl-L-methionine.

Belongs to the class I-like SAM-binding methyltransferase superfamily. TRM5/TYW2 family. In terms of assembly, monomer.

The protein localises to the mitochondrion matrix. The protein resides in the nucleus. It localises to the cytoplasm. It catalyses the reaction guanosine(37) in tRNA + S-adenosyl-L-methionine = N(1)-methylguanosine(37) in tRNA + S-adenosyl-L-homocysteine + H(+). Functionally, specifically methylates the N1 position of guanosine-37 in various cytoplasmic and mitochondrial tRNAs. Methylation is not dependent on the nature of the nucleoside 5' of the target nucleoside. This is the first step in the biosynthesis of wybutosine (yW), a modified base adjacent to the anticodon of tRNAs and required for accurate decoding. This chain is tRNA (guanine(37)-N(1))-methyltransferase, found in Plasmodium vivax (strain Salvador I).